Reading from the N-terminus, the 1371-residue chain is Perilipin-4 (1371 aa).

Basic and acidic residues predominate over residues 1–13 (MSAPDEGRRDPPK). Residues 1 to 22 (MSAPDEGRRDPPKPKGKTLGSF) are disordered. Phosphoserine occurs at positions 25 and 31. Residues 37–86 (ANAHSSARARPAADPTGAPAAEAAQPQAQVAAHPEQTAPWTEKELQPSEK) are disordered. The segment covering 44–72 (RARPAADPTGAPAAEAAQPQAQVAAHPEQ) has biased composition (low complexity). 27 repeat units span residues 109 to 141 (GVAS…VVSS), 142 to 174 (GVTG…TVST), 175 to 207 (GLTG…TVTT), 208 to 240 (GVMG…AVST), 241 to 273 (GLTG…TVCS), 274 to 306 (GVTG…TVCS), 307 to 339 (GVTG…TVCS), 340 to 372 (GVTG…TVCS), 373 to 405 (GVTG…TMST), 406 to 438 (GLTG…TVCS), 439 to 471 (GVTG…TVCS), 472 to 504 (GVTG…AVST), 505 to 537 (GLTG…TVCS), 538 to 570 (GVTS…TMST), 571 to 603 (GLTG…TVTT), 604 to 636 (GLVG…TIYS), 637 to 669 (GVTS…TFGS), 670 to 702 (GVTS…TVTT), 703 to 735 (GLMG…TVCS), 736 to 768 (GVTG…AVST), 769 to 801 (GLTG…AVCS), 802 to 834 (GVTG…TVCS), 835 to 867 (GVTG…TLGS), 868 to 900 (GVTG…AVST), 901 to 933 (GLTG…TVCS), 934 to 966 (GVTG…AVTT), and 967 to 999 (GVTG…TVFS). The interval 109 to 999 (GVASVVDVAK…LMGTKDTVFS (891 aa)) is 27 X 33 AA approximate tandem repeat. The segment covering 1060 to 1083 (PATSWGGLTSSRTTDNGGEQTALS) has biased composition (polar residues). Disordered stretches follow at residues 1060-1093 (PATS…SGIS) and 1240-1260 (QAPE…EDAA).

The protein belongs to the perilipin family.

It is found in the cell membrane. The protein resides in the cytoplasm. The protein localises to the lipid droplet. Its function is as follows. May play a role in triacylglycerol packaging into adipocytes. May function as a coat protein involved in the biogenesis of lipid droplets. This is Perilipin-4 from Homo sapiens (Human).